Here is a 117-residue protein sequence, read N- to C-terminus: Aspartate 1-decarboxylase (117 aa).

Serine 25 serves as the catalytic Schiff-base intermediate with substrate; via pyruvic acid. Serine 25 bears the Pyruvic acid (Ser) mark. Residue threonine 57 participates in substrate binding. Residue tyrosine 58 is the Proton donor of the active site. 72 to 74 contributes to the substrate binding site; the sequence is GAA.

This sequence belongs to the PanD family. In terms of assembly, heterooctamer of four alpha and four beta subunits. The cofactor is pyruvate. Post-translationally, is synthesized initially as an inactive proenzyme, which is activated by self-cleavage at a specific serine bond to produce a beta-subunit with a hydroxyl group at its C-terminus and an alpha-subunit with a pyruvoyl group at its N-terminus.

It is found in the cytoplasm. The catalysed reaction is L-aspartate + H(+) = beta-alanine + CO2. It functions in the pathway cofactor biosynthesis; (R)-pantothenate biosynthesis; beta-alanine from L-aspartate: step 1/1. Functionally, catalyzes the pyruvoyl-dependent decarboxylation of aspartate to produce beta-alanine. This chain is Aspartate 1-decarboxylase, found in Helicobacter pylori (strain ATCC 700392 / 26695) (Campylobacter pylori).